The following is a 651-amino-acid chain: Acetyl-coenzyme A synthetase 1 (651 aa).

Residues 191-194 (RGGK), Thr311, and Asn335 each bind CoA. Residues 387–389 (GEP), 411–416 (DTWWQT), Asp500, and Arg515 each bind ATP. Ser523 lines the CoA pocket. Position 526 (Arg526) interacts with ATP. Residues Val537, His539, and Val542 each contribute to the Mg(2+) site. Arg584 provides a ligand contact to CoA. An N6-acetyllysine modification is found at Lys609.

Belongs to the ATP-dependent AMP-binding enzyme family. Requires Mg(2+) as cofactor. Acetylated. Deacetylation by the SIR2-homolog deacetylase activates the enzyme.

It catalyses the reaction acetate + ATP + CoA = acetyl-CoA + AMP + diphosphate. In terms of biological role, catalyzes the conversion of acetate into acetyl-CoA (AcCoA), an essential intermediate at the junction of anabolic and catabolic pathways. AcsA undergoes a two-step reaction. In the first half reaction, AcsA combines acetate with ATP to form acetyl-adenylate (AcAMP) intermediate. In the second half reaction, it can then transfer the acetyl group from AcAMP to the sulfhydryl group of CoA, forming the product AcCoA. This chain is Acetyl-coenzyme A synthetase 1, found in Pseudomonas aeruginosa (strain ATCC 15692 / DSM 22644 / CIP 104116 / JCM 14847 / LMG 12228 / 1C / PRS 101 / PAO1).